We begin with the raw amino-acid sequence, 384 residues long: Deoxyguanosinetriphosphate triphosphohydrolase-like protein (384 aa).

One can recognise an HD domain in the interval 62-198 (RLTHSLEVST…AALADDISYI (137 aa)).

The protein belongs to the dGTPase family. Type 2 subfamily.

This chain is Deoxyguanosinetriphosphate triphosphohydrolase-like protein, found in Rickettsia rickettsii (strain Iowa).